The sequence spans 2102 residues: Probable serine/threonine-protein kinase DDB_G0272282 (2102 aa).

In terms of domain architecture, PX spans 1–118 (MKYQLSILGD…NWLVPQNEPA (118 aa)). Positions 124–222 (NPDKSGYLIK…WIKAIELSQQ (99 aa)) constitute a PH domain. A compositionally biased stretch (basic and acidic residues) spans 225–240 (QDQEQYRKQEEEERQK). Disordered stretches follow at residues 225–289 (QDQE…SDGS), 302–390 (GPNN…SDLN), 426–558 (EQPG…SASP), 574–665 (SNLP…PLPN), 685–768 (NNNS…NNSL), 804–842 (KKKE…GTLR), 1029–1051 (QQQQ…SSVN), 1106–1224 (GTPT…PQPQ), and 1476–1514 (SSKV…SSLT). Composition is skewed to low complexity over residues 256 to 281 (STLT…LPSS) and 304 to 327 (NNSN…NNHN). Basic residues predominate over residues 328-348 (HYNHHNNNHNNSHHHHHHHNG). Low complexity-rich tracts occupy residues 353-376 (SSQV…STSL) and 426-437 (EQPGSYQQPQHQ). Positions 438–450 (QGGGGGGGGGGGN) are enriched in gly residues. Residues 466–484 (SNLSSRSNSNSSGSSSGSG) are compositionally biased toward low complexity. The segment covering 485-501 (SSSGSGPIGSGGVGGGL) has biased composition (gly residues). 2 stretches are compositionally biased toward low complexity: residues 535 to 558 (SNSS…SASP) and 587 to 626 (NANN…NNGN). Polar residues predominate over residues 627 to 659 (TASGSSCNTTPNLLPAPTNVSPIQNRARSSPMT). Over residues 804 to 824 (KKKEKDKEKEKDKEKEKEKEI) the composition is skewed to basic and acidic residues. Polar residues predominate over residues 827–841 (NISTSTTPNKKNGTL). Residues 1106-1118 (GTPTTTSGDNTPL) are compositionally biased toward polar residues. Low complexity-rich tracts occupy residues 1119–1182 (TNTA…NSSI), 1196–1221 (EQQQ…QQQP), and 1476–1492 (SSKV…SPIL). The segment covering 1493–1507 (SSPPPPMKQPPPQVI) has biased composition (pro residues). Positions 1527–1851 (FEIIKPISRG…AYEVKTHPFF (325 aa)) constitute a Protein kinase domain. Residues 1533-1541 (ISRGAFGRV) and Lys1556 contribute to the ATP site. Asp1650 (proton acceptor) is an active-site residue. 3 stretches are compositionally biased toward low complexity: residues 1687–1729 (NTNT…SQTN), 1902–1999 (SQPQ…NINN), and 2006–2052 (NNNS…QINN). Disordered stretches follow at residues 1687 to 1741 (NTNT…KNTL) and 1902 to 2070 (SQPQ…SKIE). The AGC-kinase C-terminal domain maps to 1852–1911 (ANVNWDTLIDQEMDNIFLPKPENNYDTDYFWDRQSMYDDEAEDDFLTINQSQPQHQSQHQ).

This sequence belongs to the protein kinase superfamily. AGC Ser/Thr protein kinase family.

The enzyme catalyses L-seryl-[protein] + ATP = O-phospho-L-seryl-[protein] + ADP + H(+). It catalyses the reaction L-threonyl-[protein] + ATP = O-phospho-L-threonyl-[protein] + ADP + H(+). This Dictyostelium discoideum (Social amoeba) protein is Probable serine/threonine-protein kinase DDB_G0272282.